We begin with the raw amino-acid sequence, 356 residues long: Protein MGF 360-19R (356 aa).

The ANK repeat unit spans residues 61–93; it reads LLNTALMKAVQENNYELIMLFTEWGANINYGLL.

It belongs to the asfivirus MGF 360 family.

Its function is as follows. Plays a role in virus cell tropism, and may be required for efficient virus replication in macrophages. The chain is Protein MGF 360-19R from African swine fever virus (isolate Pig/Kenya/KEN-50/1950) (ASFV).